The sequence spans 128 residues: Small ribosomal subunit protein uS14m (128 aa).

The protein belongs to the universal ribosomal protein uS14 family. In terms of assembly, component of the mitochondrial small ribosomal subunit (mt-SSU). Mature mammalian 55S mitochondrial ribosomes consist of a small (28S) and a large (39S) subunit. The 28S small subunit contains a 12S ribosomal RNA (12S mt-rRNA) and 30 different proteins. The 39S large subunit contains a 16S rRNA (16S mt-rRNA), a copy of mitochondrial valine transfer RNA (mt-tRNA(Val)), which plays an integral structural role, and 52 different proteins. Interacts with LIAT1.

The protein resides in the mitochondrion. The chain is Small ribosomal subunit protein uS14m from Homo sapiens (Human).